We begin with the raw amino-acid sequence, 543 residues long: Probable protein kinase UbiB (543 aa).

The 379-residue stretch at 123–501 (DFDSQALASA…QQRQGQSRYL (379 aa)) folds into the Protein kinase domain. Residues 129–137 (LASASIAQV) and Lys-152 contribute to the ATP site. Residue Asp-287 is the Proton acceptor of the active site. The chain crosses the membrane as a helical span at residues 517 to 539 (LADATEVSTGFIVAGALAWFIGW).

It belongs to the ABC1 family. UbiB subfamily.

Its subcellular location is the cell inner membrane. It functions in the pathway cofactor biosynthesis; ubiquinone biosynthesis [regulation]. Its function is as follows. Is probably a protein kinase regulator of UbiI activity which is involved in aerobic coenzyme Q (ubiquinone) biosynthesis. The sequence is that of Probable protein kinase UbiB from Yersinia pseudotuberculosis serotype O:1b (strain IP 31758).